Consider the following 59-residue polypeptide: Potassium channel toxin alpha-KTx 3.10 (59 aa).

The signal sequence occupies residues 1–22 (MKVFFAVLIALFVCSMVIGIHG). 3 disulfides stabilise this stretch: cysteine 30-cysteine 50, cysteine 36-cysteine 55, and cysteine 40-cysteine 57.

This sequence belongs to the short scorpion toxin superfamily. Potassium channel inhibitor family. Alpha-KTx 03 subfamily. Expressed by the venom gland.

It is found in the secreted. Functionally, inhibits insect potassium channel. Is at least a 100-fold more potent against the Drosophila Shaker channel than towards its mammalian homologs Kv1.1/KCNA1 and Kv1.3/KCNA3. The polypeptide is Potassium channel toxin alpha-KTx 3.10 (Buthus israelis (Israeli scorpion)).